The chain runs to 686 residues: Gamma-aminobutyric acid receptor alpha-like (686 aa).

Positions 1-58 (MCTMPATRDASGSGDASTDLIAARSLSSHQGQRSNLRIFKLLISCCLLMLCIYPNAWP) are cleaved as a signal peptide. The Extracellular segment spans residues 97-393 (SSWLTQSNNH…NFHLQRHMGN (297 aa)). Asn108 carries an N-linked (GlcNAc...) asparagine glycan. Residues Cys233 and Cys247 are joined by a disulfide bond. N-linked (GlcNAc...) asparagine glycosylation is present at Asn292. Helical transmembrane passes span 394-414 (FLIQ…VSFW), 424-441 (VSLG…GLEA), and 456-476 (FFVF…AVVH). Topologically, residues 477 to 650 (YYTKYGSGEC…YNSVSKIDRA (174 aa)) are cytoplasmic. Residues 570–641 (KPPRADSDED…RRKGKRTPQY (72 aa)) are disordered. Positions 586 to 596 (QLRANEAPTTS) are enriched in polar residues. A compositionally biased stretch (low complexity) spans 597 to 609 (AAAAAAQAAAQAA). Residues 651-671 (SRIVFPLLFILINVFYWYGYL) form a helical membrane-spanning segment.

It belongs to the ligand-gated ion channel (TC 1.A.9) family. Gamma-aminobutyric acid receptor (TC 1.A.9.5) subfamily. Generally pentameric. There are five types of GABA(A) receptor chains: alpha, beta, gamma, delta, and rho. Interacts with Lcch3 (beta chain).

It is found in the postsynaptic cell membrane. It localises to the cell membrane. Its function is as follows. GABA, an inhibitory neurotransmitter, mediates neuronal inhibition by binding to the GABA receptor and opening an integral chloride channel. May combine with the ligand-gated ion channel subunit Lcch3 to form cation-selective GABA-gated ion channels. The sequence is that of Gamma-aminobutyric acid receptor alpha-like (Grd) from Drosophila melanogaster (Fruit fly).